A 311-amino-acid polypeptide reads, in one-letter code: Ornithine carbamoyltransferase (311 aa).

Residues 54-57 (STRT), Gln81, Arg105, and 132-135 (HPCQ) each bind carbamoyl phosphate. L-ornithine-binding positions include Asn163, Asp221, and 225–226 (SM). Carbamoyl phosphate contacts are provided by residues 261–262 (CL) and Arg289.

It belongs to the aspartate/ornithine carbamoyltransferase superfamily. OTCase family.

It is found in the cytoplasm. The enzyme catalyses carbamoyl phosphate + L-ornithine = L-citrulline + phosphate + H(+). It participates in amino-acid degradation; L-arginine degradation via ADI pathway; carbamoyl phosphate from L-arginine: step 2/2. In terms of biological role, reversibly catalyzes the transfer of the carbamoyl group from carbamoyl phosphate (CP) to the N(epsilon) atom of ornithine (ORN) to produce L-citrulline. The chain is Ornithine carbamoyltransferase from Azoarcus sp. (strain BH72).